Here is a 418-residue protein sequence, read N- to C-terminus: UDP-N-acetylglucosamine 1-carboxyvinyltransferase (418 aa).

22–23 (KN) provides a ligand contact to phosphoenolpyruvate. R92 contributes to the UDP-N-acetyl-alpha-D-glucosamine binding site. The Proton donor role is filled by C116. C116 carries the 2-(S-cysteinyl)pyruvic acid O-phosphothioketal modification. UDP-N-acetyl-alpha-D-glucosamine-binding positions include 121-125 (RPIDL), D305, and L327.

This sequence belongs to the EPSP synthase family. MurA subfamily.

It localises to the cytoplasm. It catalyses the reaction phosphoenolpyruvate + UDP-N-acetyl-alpha-D-glucosamine = UDP-N-acetyl-3-O-(1-carboxyvinyl)-alpha-D-glucosamine + phosphate. Its pathway is cell wall biogenesis; peptidoglycan biosynthesis. Functionally, cell wall formation. Adds enolpyruvyl to UDP-N-acetylglucosamine. This is UDP-N-acetylglucosamine 1-carboxyvinyltransferase from Campylobacter jejuni subsp. jejuni serotype O:6 (strain 81116 / NCTC 11828).